A 309-amino-acid polypeptide reads, in one-letter code: Homoserine O-succinyltransferase (309 aa).

Residue Cys-142 is the Acyl-thioester intermediate of the active site. Substrate-binding residues include Lys-163 and Ser-192. The Proton acceptor role is filled by His-235. Glu-237 is a catalytic residue. Arg-249 contributes to the substrate binding site.

Belongs to the MetA family. In terms of assembly, homodimer.

It localises to the cytoplasm. It catalyses the reaction L-homoserine + succinyl-CoA = O-succinyl-L-homoserine + CoA. Its pathway is amino-acid biosynthesis; L-methionine biosynthesis via de novo pathway; O-succinyl-L-homoserine from L-homoserine: step 1/1. Its function is as follows. Transfers a succinyl group from succinyl-CoA to L-homoserine, forming succinyl-L-homoserine. This chain is Homoserine O-succinyltransferase, found in Escherichia coli (strain ATCC 8739 / DSM 1576 / NBRC 3972 / NCIMB 8545 / WDCM 00012 / Crooks).